The primary structure comprises 598 residues: Elongation factor 4 (598 aa).

The tr-type G domain maps to 5–187 (SHIRNFSIIA…RLVATIPAPI (183 aa)). GTP is bound by residues 17–22 (DHGKST) and 134–137 (NKID).

This sequence belongs to the TRAFAC class translation factor GTPase superfamily. Classic translation factor GTPase family. LepA subfamily.

It is found in the cell inner membrane. The enzyme catalyses GTP + H2O = GDP + phosphate + H(+). Functionally, required for accurate and efficient protein synthesis under certain stress conditions. May act as a fidelity factor of the translation reaction, by catalyzing a one-codon backward translocation of tRNAs on improperly translocated ribosomes. Back-translocation proceeds from a post-translocation (POST) complex to a pre-translocation (PRE) complex, thus giving elongation factor G a second chance to translocate the tRNAs correctly. Binds to ribosomes in a GTP-dependent manner. The protein is Elongation factor 4 of Pseudomonas fluorescens (strain Pf0-1).